We begin with the raw amino-acid sequence, 564 residues long: Eukaryotic translation initiation factor 3 subunit L (564 aa).

One can recognise a PCI domain in the interval 331 to 537 (DAIRVFANIL…IHIADTKVAR (207 aa)).

The protein belongs to the eIF-3 subunit L family. In terms of assembly, component of the eukaryotic translation initiation factor 3 (eIF-3) complex, which is composed of 13 subunits: EIF3A, EIF3B, EIF3C, EIF3D, EIF3E, EIF3F, EIF3G, EIF3H, EIF3I, EIF3J, EIF3K, EIF3L and EIF3M.

The protein resides in the cytoplasm. Functionally, component of the eukaryotic translation initiation factor 3 (eIF-3) complex, which is involved in protein synthesis of a specialized repertoire of mRNAs and, together with other initiation factors, stimulates binding of mRNA and methionyl-tRNAi to the 40S ribosome. The eIF-3 complex specifically targets and initiates translation of a subset of mRNAs involved in cell proliferation. This chain is Eukaryotic translation initiation factor 3 subunit L, found in Gallus gallus (Chicken).